The following is a 770-amino-acid chain: Proton-coupled zinc antiporter SLC30A5 (770 aa).

Over 1–29 (MEEKYSSQALAGGGVLGPVDVPSARLTRY) the chain is Cytoplasmic. The chain crosses the membrane as a helical span at residues 30–50 (IVLLCFAKFLKAVGLFESYDL). The Lumenal segment spans residues 51-53 (LKA). Residues 54–74 (VHLVQFIFIVKLGSAFFMVLF) traverse the membrane as a helical segment. Over 75 to 95 (QKPFSSGKVVTKHQWIKIFKH) the chain is Cytoplasmic. The helical transmembrane segment at 96 to 116 (AVVGCIISLLWFFGLTLCGPL) threads the bilayer. Residue R117 is a topological domain, lumenal. Residues 118–138 (TLLLFEHSDVVVLSLLSVLFT) form a helical membrane-spanning segment. Over 139–149 (SSGGGPAKTRG) the chain is Cytoplasmic. A helical membrane pass occupies residues 150–170 (AAFFIIAVICLLLFDNDDLMA). Residues 171 to 190 (KIAEHPEGHHDSALTHVLYT) lie on the Lumenal side of the membrane. The helical transmembrane segment at 191–211 (VIAFLGVADHKGGVLLLVLAL) threads the bilayer. At 212-235 (CCKVGFHMASRKLSVDVGGAKRLQ) the chain is on the cytoplasmic side. Residues 236 to 256 (ALSHLVSVLLLCPWVIVLSLT) traverse the membrane as a helical segment. The Lumenal portion of the chain corresponds to 257–264 (TESKVESW). A helical membrane pass occupies residues 265–285 (SSLIMPFITVIFFVVILDFYV). The Cytoplasmic segment spans residues 286 to 300 (ESICSVKMESSKCAR). A helical membrane pass occupies residues 301 to 321 (YGSFLIFISALLFGNFWTHPI). At 322-339 (TDQLRAMNKPAHHESTEH) the chain is on the lumenal side. Residues 340–360 (VLSGGVVVSAVFFILSANILS) traverse the membrane as a helical segment. The Cytoplasmic segment spans residues 361–415 (SPSRKGQKGTLIGYSPEGTPLYNFMGDAIQQSSQSLPRFIKESLKQILEEYDSRQ). The chain crosses the membrane as a helical span at residues 416 to 436 (IFYFLCLNLAFTFVELFYGVW). Topologically, residues 437 to 445 (TNSLGLISD) are lumenal. Residues 446–466 (GFHMLFDCSALVMGLFAALMT) traverse the membrane as a helical segment. H448 and D452 together coordinate Zn(2+). The Cytoplasmic portion of the chain corresponds to 467–480 (RWKATRIFSYGYGR). The chain crosses the membrane as a helical span at residues 481–501 (VEILSGFINGLFLMVIAFFVF). Residues 502-517 (MESVARLVDPPDIDTN) lie on the Lumenal side of the membrane. The chain crosses the membrane as a helical span at residues 518–538 (MLTPVSVGGLIVNLVGICAFS). The segment at 539-579 (HAHSHGASRGGCHSHEHSHSYHGHSHSHGHGHSHNDHGHSH) is his-rich loop; required for zinc transport. The Cytoplasmic portion of the chain corresponds to 539–597 (HAHSHGASRGGCHSHEHSHSYHGHSHSHGHGHSHNDHGHSHGHSHVSSGGGMNTNMRGV). Positions 548 to 586 (GGCHSHEHSHSYHGHSHSHGHGHSHNDHGHSHGHSHVSS) are disordered. The span at 558 to 570 (SYHGHSHSHGHGH) shows a compositional bias: basic residues. The helical transmembrane segment at 598 to 618 (FLHVLADTLGSVGVIVSTTFI) threads the bilayer. Residues H600 and D604 each contribute to the Zn(2+) site. Residues 619–622 (QQFG) are Lumenal-facing. The helical transmembrane segment at 623–643 (WLIADPLCSLFIATLIFLSVI) threads the bilayer. Residues 644–770 (PLLKDACQVL…KYYKDGTYIM (127 aa)) lie on the Cytoplasmic side of the membrane.

The protein belongs to the cation diffusion facilitator (CDF) transporter (TC 2.A.4) family. SLC30A subfamily. In terms of assembly, heterodimer with SLC30A6/ZNT6; form a functional zinc ion transmembrane transporter.

Its subcellular location is the golgi apparatus. The protein resides in the golgi stack membrane. It is found in the cytoplasmic vesicle. It localises to the COPII-coated vesicle membrane. The protein localises to the secretory vesicle membrane. Its subcellular location is the trans-Golgi network membrane. It carries out the reaction Zn(2+)(in) + 2 H(+)(out) = Zn(2+)(out) + 2 H(+)(in). Together with SLC30A6 forms a functional proton-coupled zinc ion antiporter mediating zinc entry into the lumen of organelles along the secretory pathway. By contributing to zinc ion homeostasis within the early secretory pathway, regulates the activation and folding of enzymes like alkaline phosphatases and enzymes involved in phosphatidylinositol glycan anchor biosynthesis. The protein is Proton-coupled zinc antiporter SLC30A5 of Gallus gallus (Chicken).